The sequence spans 166 residues: Signal peptidase complex catalytic subunit SEC11 (166 aa).

Residues 1–9 lie on the Cytoplasmic side of the membrane; that stretch reads MNIRQQLTQ. A helical; Signal-anchor for type II membrane protein transmembrane segment spans residues 10-30; it reads LLTLGYVFASAFMLWKTLSVV. Residues 31 to 166 lie on the Lumenal side of the membrane; sequence ANLHSPIVVV…LGLSSLFSNE (136 aa). Active-site charge relay system residues include S44, H83, and D108. The segment at 152-163 is C-terminal short (CTS) helix; that stretch reads GLLGLLGLSSLF.

It belongs to the peptidase S26B family. Component of the signal peptidase complex (SPC) composed of a catalytic subunit SEC11 and three accessory subunits SPC1, SPC2 and SPC3. The complex induces a local thinning of the ER membrane which is used to measure the length of the signal peptide (SP) h-region of protein substrates. This ensures the selectivity of the complex towards h-regions shorter than 18-20 amino acids. SPC associates with the translocon complex.

It is found in the endoplasmic reticulum membrane. It catalyses the reaction Cleavage of hydrophobic, N-terminal signal or leader sequences from secreted and periplasmic proteins.. Its function is as follows. Catalytic component of the signal peptidase complex (SPC) which catalyzes the cleavage of N-terminal signal sequences from nascent proteins as they are translocated into the lumen of the endoplasmic reticulum. Specifically cleaves N-terminal signal peptides that contain a hydrophobic alpha-helix (h-region) shorter than 18-20 amino acids. The chain is Signal peptidase complex catalytic subunit SEC11 (SEC11) from Lodderomyces elongisporus (strain ATCC 11503 / CBS 2605 / JCM 1781 / NBRC 1676 / NRRL YB-4239) (Yeast).